A 489-amino-acid polypeptide reads, in one-letter code: Betaine aldehyde dehydrogenase (489 aa).

The K(+) site is built by T26 and D93. 150-152 (GAW) contributes to the NAD(+) binding site. Catalysis depends on K162, which acts as the Charge relay system. 176 to 179 (KPSE) contacts NAD(+). Position 180 (V180) interacts with K(+). 229 to 232 (GVET) contributes to the NAD(+) binding site. Position 245 (L245) interacts with K(+). The active-site Proton acceptor is E251. The NAD(+) site is built by G253, C285, and E386. C285 serves as the catalytic Nucleophile. At C285 the chain carries Cysteine sulfenic acid (-SOH). K456 and G459 together coordinate K(+). The active-site Charge relay system is E463.

It belongs to the aldehyde dehydrogenase family. Dimer of dimers. K(+) serves as cofactor.

It catalyses the reaction betaine aldehyde + NAD(+) + H2O = glycine betaine + NADH + 2 H(+). It participates in amine and polyamine biosynthesis; betaine biosynthesis via choline pathway; betaine from betaine aldehyde: step 1/1. Involved in the biosynthesis of the osmoprotectant glycine betaine. Catalyzes the irreversible oxidation of betaine aldehyde to the corresponding acid. This Burkholderia vietnamiensis (strain G4 / LMG 22486) (Burkholderia cepacia (strain R1808)) protein is Betaine aldehyde dehydrogenase.